We begin with the raw amino-acid sequence, 564 residues long: Mitochondrial distribution and morphology protein 34-1 (564 aa).

The region spanning 1–195 (MAFKFNWSPL…LPAIIHRLSL (195 aa)) is the SMP-LTD domain. Polar residues-rich tracts occupy residues 297–322 (PDQN…SQTG) and 329–352 (DNAS…SSYG). 3 disordered regions span residues 297 to 408 (PDQN…VTSA), 414 to 433 (HEQP…DQSL), and 452 to 473 (DLSS…PFNT). Residues 359 to 371 (RHSRAHARRRKKR) show a composition bias toward basic residues. Residues 383–394 (SDSASVSVSDES) show a composition bias toward low complexity. The span at 396–408 (YTESASAPSVTSA) shows a compositional bias: polar residues. Over residues 452 to 466 (DLSSEIVRDRAEPSE) the composition is skewed to basic and acidic residues.

It belongs to the MDM34 family. As to quaternary structure, component of the ER-mitochondria encounter structure (ERMES) or MDM complex, composed of mmm1, mdm10, mdm12 and mdm34.

The protein localises to the mitochondrion outer membrane. In terms of biological role, component of the ERMES/MDM complex, which serves as a molecular tether to connect the endoplasmic reticulum (ER) and mitochondria. Components of this complex are involved in the control of mitochondrial shape and protein biogenesis, and function in nonvesicular lipid trafficking between the ER and mitochondria. Mdm34 is required for the interaction of the ER-resident membrane protein mmm1 and the outer mitochondrial membrane-resident beta-barrel protein mdm10. The polypeptide is Mitochondrial distribution and morphology protein 34-1 (Penicillium rubens (strain ATCC 28089 / DSM 1075 / NRRL 1951 / Wisconsin 54-1255) (Penicillium chrysogenum)).